A 237-amino-acid polypeptide reads, in one-letter code: Uridylate kinase (237 aa).

Lys11–Gly14 is a binding site for ATP. Position 53 (Gly53) interacts with UMP. Positions 54 and 58 each coordinate ATP. Residues Asp73 and Thr134 to Thr141 contribute to the UMP site. ATP is bound by residues Thr161, Tyr167, and Asp170.

This sequence belongs to the UMP kinase family. Homohexamer.

It is found in the cytoplasm. The enzyme catalyses UMP + ATP = UDP + ADP. The protein operates within pyrimidine metabolism; CTP biosynthesis via de novo pathway; UDP from UMP (UMPK route): step 1/1. Its activity is regulated as follows. Inhibited by UTP. Catalyzes the reversible phosphorylation of UMP to UDP. This Burkholderia vietnamiensis (strain G4 / LMG 22486) (Burkholderia cepacia (strain R1808)) protein is Uridylate kinase.